A 329-amino-acid chain; its full sequence is Ribosomal protein L11 methyltransferase (329 aa).

Residues Thr-177, Gly-198, Asp-220, and Asn-264 each coordinate S-adenosyl-L-methionine.

This sequence belongs to the methyltransferase superfamily. PrmA family.

Its subcellular location is the cytoplasm. It catalyses the reaction L-lysyl-[protein] + 3 S-adenosyl-L-methionine = N(6),N(6),N(6)-trimethyl-L-lysyl-[protein] + 3 S-adenosyl-L-homocysteine + 3 H(+). In terms of biological role, methylates ribosomal protein L11. This Helicobacter pylori (strain HPAG1) protein is Ribosomal protein L11 methyltransferase.